The chain runs to 38 residues: MKVSSSVGKRCESCKIIRRKGKIYVICKKNPNHKQRQG.

This sequence belongs to the bacterial ribosomal protein bL36 family.

This chain is Large ribosomal subunit protein bL36, found in Chloroherpeton thalassium (strain ATCC 35110 / GB-78).